The following is a 470-amino-acid chain: E3 ubiquitin-protein ligase TRAIP (470 aa).

The segment at Cys-7 to Arg-50 adopts an RING-type; atypical zinc-finger fold. Residues Ala-76–Thr-277 adopt a coiled-coil conformation. Positions Leu-211–Gln-470 are interaction with CYLD. A PIP-box motif is present at residues Gln-461 to Gln-470.

The protein belongs to the TRAIP family. Interacts (via PIP-box) with PCNA. Binds TRAF1, TRAF2, TRAF3, TRAF5 and TRAF6 is part of the receptor-TRAF signaling complex. May interact with CYLD; the C-terminus interacts with CYLD, however the interaction was not detected with the full-length protein. Interacts with POLK and POLN. Interacts with UIMC1. In terms of processing, autoubiquitinated. Post-translationally, sumoylated; sumoylation is required for nuclear localization. Sumoylation increases protein stability, possibly by preventing ubiquitination. As to expression, detected in testis and thymus, and at lower levels in spleen.

Its subcellular location is the nucleus. It is found in the nucleoplasm. The protein resides in the nucleolus. It localises to the chromosome. The protein localises to the cytoplasm. Its subcellular location is the perinuclear region. It catalyses the reaction S-ubiquitinyl-[E2 ubiquitin-conjugating enzyme]-L-cysteine + [acceptor protein]-L-lysine = [E2 ubiquitin-conjugating enzyme]-L-cysteine + N(6)-ubiquitinyl-[acceptor protein]-L-lysine.. It participates in protein modification; protein ubiquitination. In terms of biological role, E3 ubiquitin ligase required to protect genome stability in response to replication stress. Acts as a key regulator of interstrand cross-link repair, which takes place when both strands of duplex DNA are covalently tethered together, thereby blocking replication and transcription. During mitosis, controls the choice between the two pathways of replication-coupled interstrand-cross-link repair by mediating ubiquitination of MCM7 subunit of the CMG helicase complex. Short ubiquitin chains on MCM7 promote recruitment of DNA glycosylase NEIL3. If the interstrand cross-link cannot be cleaved by NEIL3, the ubiquitin chains continue to grow on MCM7, promoting the unloading of the CMG helicase complex by the VCP/p97 ATPase, enabling the Fanconi anemia DNA repair pathway. Only catalyzes ubiquitination of MCM7 when forks converge. Also involved in the repair of covalent DNA-protein cross-links (DPCs) during DNA synthesis: promotes ubiquitination of DPCs, leading to their degradation by the proteasome. Has also been proposed to play a role in promoting translesion synthesis by mediating the assembly of 'Lys-63'-linked poly-ubiquitin chains on the Y-family polymerase POLN in order to facilitate bypass of DNA lesions and preserve genomic integrity. The function in translesion synthesis is however controversial. Acts as a regulator of the spindle assembly checkpoint. Also acts as a negative regulator of innate immune signaling by inhibiting activation of NF-kappa-B mediated by TNF. Negatively regulates TLR3/4- and RIG-I-mediated IRF3 activation and subsequent IFNB1 production and cellular antiviral response by promoting 'Lys-48'-linked polyubiquitination of TNK1 leading to its proteasomal degradation. The protein is E3 ubiquitin-protein ligase TRAIP of Mus musculus (Mouse).